A 161-amino-acid polypeptide reads, in one-letter code: 3-isopropylmalate dehydratase small subunit (161 aa).

Belongs to the LeuD family. LeuD type 2 subfamily. Heterodimer of LeuC and LeuD.

The enzyme catalyses (2R,3S)-3-isopropylmalate = (2S)-2-isopropylmalate. It participates in amino-acid biosynthesis; L-leucine biosynthesis; L-leucine from 3-methyl-2-oxobutanoate: step 2/4. In terms of biological role, catalyzes the isomerization between 2-isopropylmalate and 3-isopropylmalate, via the formation of 2-isopropylmaleate. This chain is 3-isopropylmalate dehydratase small subunit, found in Sulfolobus acidocaldarius (strain ATCC 33909 / DSM 639 / JCM 8929 / NBRC 15157 / NCIMB 11770).